The following is a 322-amino-acid chain: Ribose-phosphate pyrophosphokinase (322 aa).

ATP contacts are provided by residues 43-45 (DGE) and 102-103 (RQ). Mg(2+)-binding residues include His137 and Asp177. The active site involves Lys201. D-ribose 5-phosphate contacts are provided by residues Arg203, Asp227, and 231-235 (DTAGT).

This sequence belongs to the ribose-phosphate pyrophosphokinase family. Class I subfamily. In terms of assembly, homohexamer. The cofactor is Mg(2+).

The protein localises to the cytoplasm. The catalysed reaction is D-ribose 5-phosphate + ATP = 5-phospho-alpha-D-ribose 1-diphosphate + AMP + H(+). It functions in the pathway metabolic intermediate biosynthesis; 5-phospho-alpha-D-ribose 1-diphosphate biosynthesis; 5-phospho-alpha-D-ribose 1-diphosphate from D-ribose 5-phosphate (route I): step 1/1. In terms of biological role, involved in the biosynthesis of the central metabolite phospho-alpha-D-ribosyl-1-pyrophosphate (PRPP) via the transfer of pyrophosphoryl group from ATP to 1-hydroxyl of ribose-5-phosphate (Rib-5-P). The chain is Ribose-phosphate pyrophosphokinase from Xylella fastidiosa (strain Temecula1 / ATCC 700964).